The following is a 1094-amino-acid chain: Probable arabinosyltransferase C (1094 aa).

13 helical membrane-spanning segments follow: residues 28-50, 232-251, 264-286, 341-360, 373-392, 431-453, 466-488, 530-552, 565-582, 586-608, 620-642, 657-679, and 700-722; these read IARYVAVVAGLLGAVLAIATPLL, AAMILGVALTGAALVALHIL, PARWWSTGGLDTLVIAVLVWWHF, SIWMRLPTLAMALTCWWVIS, TSRAAAWTAAGMFLAVWLPL, IGALTLFSGPTGIASIGALLVAI, RFGVLPLVAPILAAATVTAIPIF, SIARRFAVLALVLALAVSVAMSL, SRRIIGITIISFLAMMFT, WTHHFGVFAGLAGSLGALAAVAV, TVFAAVVVFVLALSFASVNGWWY, WRWSLTTALLELTVLVLLLAAWF, and LAGIVQSPLAIATWLLVLFEVVS. Low complexity predominate over residues 817 to 831; it reads GSEPGTEGGTTAAPG. Positions 817–836 are disordered; sequence GSEPGTEGGTTAAPGINGSR.

Belongs to the emb family.

Its subcellular location is the cell membrane. Functionally, arabinosyl transferase responsible for the polymerization of arabinose into the arabinan of arabinogalactan. In Mycobacterium tuberculosis (strain CDC 1551 / Oshkosh), this protein is Probable arabinosyltransferase C (embC).